A 370-amino-acid chain; its full sequence is Proline-rich protein 5-like (370 aa).

The residue at position 28 (S28) is a Phosphoserine. Residues 327 to 370 form a disordered region; it reads PTFPPPHRQCSSEPSILDSPDEMELEDVASGSQEDSELNCASLS.

This sequence belongs to the PROTOR family. In terms of assembly, interacts with the mammalian target of rapamycin complex 2 (mTORC2) which contains MTOR, MLST8, PRR5, RICTOR, MAPKAP1 and DEPTOR. Interacts with RFFL. Interacts (via C-terminus) with ZFP36 (via C-terminus); this interaction may accelerate ZFP36-mediated mRNA decay during stress. Interacts with RICTOR. Ubiquitinated. Ubiquitination by RFFL promotes proteasomal degradation of PRR5L thereby modifying the substrate-specific activity of the mTORC2 complex. Ubiquitination by RFFL is stimulated by LPA/lysophosphatidic acid.

Associates with the mTORC2 complex that regulates cellular processes including survival and organization of the cytoskeleton. Regulates the activity of the mTORC2 complex in a substrate-specific manner preventing for instance the specific phosphorylation of PKCs and thereby controlling cell migration. Plays a role in the stimulation of ZFP36-mediated mRNA decay of several ZFP36-associated mRNAs, such as TNF-alpha and GM-CSF, in response to stress. Required for ZFP36 localization to cytoplasmic stress granule (SG) and P-body (PB) in response to stress. The protein is Proline-rich protein 5-like (Prr5l) of Rattus norvegicus (Rat).